Reading from the N-terminus, the 112-residue chain is ENSTAIVMITKLKERKEKCSEYMPLKCGEKHTYENFEIEIKNVRNADHYTVRTIEVRNTEEDNATHTVYHYWYAEWLDHDTPEKLRGLLTLIQEVGLRCPDIANSEYGPVVV.

Residues 1 to 112 form the Tyrosine-protein phosphatase domain; sequence ENSTAIVMIT…ANSEYGPVVV (112 aa).

Belongs to the protein-tyrosine phosphatase family.

It catalyses the reaction O-phospho-L-tyrosyl-[protein] + H2O = L-tyrosyl-[protein] + phosphate. In Styela plicata (Wrinkled sea squirt), this protein is Tyrosine-protein phosphatase 8 (STY-8).